We begin with the raw amino-acid sequence, 171 residues long: Shikimate kinase (171 aa).

14–19 is a binding site for ATP; the sequence is GAGKST. Ser18 is a binding site for Mg(2+). The substrate site is built by Asp36, Arg60, and Gly82. Arg120 is an ATP binding site. Arg139 is a binding site for substrate. Gln156 is a binding site for ATP.

Belongs to the shikimate kinase family. Monomer. The cofactor is Mg(2+).

Its subcellular location is the cytoplasm. It catalyses the reaction shikimate + ATP = 3-phosphoshikimate + ADP + H(+). It participates in metabolic intermediate biosynthesis; chorismate biosynthesis; chorismate from D-erythrose 4-phosphate and phosphoenolpyruvate: step 5/7. In terms of biological role, catalyzes the specific phosphorylation of the 3-hydroxyl group of shikimic acid using ATP as a cosubstrate. The chain is Shikimate kinase from Shewanella sp. (strain ANA-3).